Consider the following 105-residue polypeptide: UPF0473 protein SAG2089 (105 aa).

Belongs to the UPF0473 family.

This chain is UPF0473 protein SAG2089, found in Streptococcus agalactiae serotype V (strain ATCC BAA-611 / 2603 V/R).